A 649-amino-acid chain; its full sequence is MFEIKARDAMGRLGSITINGKKIETPTIMPVIHPNPKKQTVSMDLINKMADVVITNSYITYTTPELREIAETKGIHELIDFKNVVVTDSGSFQLSVYGDVNVGPMEIIDFQEKIGVDVGTILDIPTGPDVSREKAESDLIETFKRAEDSIKRRKEMGYKLALNGTIQGSKYLDLRQKSAEVMGKMDFDIYPIGAVVPLMEDYRYREVAEVILNSKMHLPTNKPVHLFGCGHPMLFALSVALGCDLFDSAAYALYAKNGRYLTADGTLHLEDMKDLKSFPCTCKVCSEYTPKQLYNLEEKEKTRLLAEHNLYVTFEEIDRIKNAIKEGNLWELVEERCRSHPKLLNGLRVISKYMDFIEKHDPVSKKSGFFYTGYESMNRPEIYRHKQRLDRIQYDKIYVTSVSENTSKPYHENLSNVPCDVDVLIKDGVFGLVPLNIDTMYPLAQNEVPDLYDFEKKYNNEFVSEFKEKHSEKILDISTYNYYINHYGKKKECDKINPDVFRVGKMLEYQYGAKILDEELMEKVKTRRSKNTGRIRNLLLEKEVLFTLRANDNFLIPAKSGAELLHEKLEFPKYRIVIDSSVEEYARAGKSVYSKFVKDCDPELRPFEEVLVVNSDDELLAYGTTILNGRELMEFDYGVAVTLRGGLKK.

Asp88 functions as the Nucleophile in the catalytic mechanism. Residues Asp123 and Ala194 each contribute to the substrate site. The Zn(2+) site is built by Cys280, Cys282, and Cys285. One can recognise a PUA domain in the interval 573–648 (KYRIVIDSSV…VAVTLRGGLK (76 aa)).

Belongs to the archaeosine tRNA-ribosyltransferase family. It depends on Zn(2+) as a cofactor.

It carries out the reaction guanosine(15) in tRNA + 7-cyano-7-deazaguanine = 7-cyano-7-carbaguanosine(15) in tRNA + guanine. It functions in the pathway tRNA modification; archaeosine-tRNA biosynthesis. Exchanges the guanine residue with 7-cyano-7-deazaguanine (preQ0) at position 15 in the dihydrouridine loop (D-loop) of archaeal tRNAs. The polypeptide is tRNA-guanine(15) transglycosylase (Methanococcus maripaludis (strain C7 / ATCC BAA-1331)).